A 273-amino-acid polypeptide reads, in one-letter code: MSPKRDGLGTGDGLHSQVLQEQVSTGDNLHECDSQGPSKDTLVREGKTYKCKECGSVFNKNSLLVRHQQIHTGVKPYECQECGKAFPEKVDFVRPMRIHTGEKPCKCVECGKVFNRRSHLLCYRQIHTGEKPYECSECGKTFSYHSVFIQHRVTHTGEKLFGCKECGKTFYYNSSLTRHMKIHTGEKPCKCSECGKTFTYRSVFFRHSMTHTAGKPYECKECGKGFYYSYSLTRHTRSHTGEKPYECLEHRKDFGYHSAFAQQSKIHSGGKNL.

C2H2-type zinc fingers lie at residues 49–71 (YKCKECGSVFNKNSLLVRHQQIH) and 77–99 (YECQECGKAFPEKVDFVRPMRIH). The segment at 105–127 (CKCVECGKVFNRRSHLLCYRQIH) adopts a C2H2-type 3; atypical zinc-finger fold. C2H2-type zinc fingers lie at residues 133 to 155 (YECSECGKTFSYHSVFIQHRVTH), 161 to 183 (FGCKECGKTFYYNSSLTRHMKIH), 189 to 211 (CKCSECGKTFTYRSVFFRHSMTH), and 217 to 239 (YECKECGKGFYYSYSLTRHTRSH).

It belongs to the krueppel C2H2-type zinc-finger protein family.

It is found in the nucleus. Its function is as follows. May be involved in transcriptional regulation. The chain is Zinc finger protein 80 (ZNF80) from Homo sapiens (Human).